A 273-amino-acid chain; its full sequence is uncharacterized protein (273 aa).

This is an uncharacterized protein from Acanthamoeba polyphaga (Amoeba).